The sequence spans 1060 residues: Centrosomal protein of 131 kDa (1060 aa).

The segment covering 1-11 (MKGSRTITATP) has biased composition (polar residues). The disordered stretch occupies residues 1–96 (MKGSRTITAT…TGSPRPAEPT (96 aa)). The tract at residues 1 to 244 (MKGSRTITAT…SQSARGTTGL (244 aa)) is interaction with PLK4. Ser-14 and Ser-35 each carry phosphoserine. 2 stretches are compositionally biased toward polar residues: residues 32-50 (RPGSASATRSIFRSMSVAT) and 73-88 (LRRSNSTTQVNQSWTG). Ser-47 is subject to Phosphoserine; by MAPKAPK2. Ser-78 bears the Phosphoserine; by MAPKAPK2 and PLK4 mark. Ser-89, Ser-105, Ser-114, Ser-146, and Ser-150 each carry phosphoserine. Disordered stretches follow at residues 136–155 (LALPASAQSPSTLDSALGPR) and 217–248 (EGGEGSDLGKPRKNLSSASQSARGTTGLLRRR). Basic and acidic residues predominate over residues 217–226 (EGGEGSDLGK). Positions 263–283 (NQAAVTIQRWYRCQVQRRRAG) constitute an IQ domain. 2 stretches are compositionally biased toward basic and acidic residues: residues 314-327 (EEAARKKAREEKAR) and 344-363 (KASEAEHRRPKDRPETRAPE). The interval 314–437 (EEAARKKARE…VSGSSRGKAR (124 aa)) is disordered. Positions 398–408 (ASESSPEQWQS) are enriched in low complexity. Residues 409-424 (PEDKPQDIHSQGEARQ) show a composition bias toward basic and acidic residues. A Phosphothreonine modification is found at Thr-473. Ser-481 carries the post-translational modification Phosphoserine.

Belongs to the CEP131 family. As to quaternary structure, self-associates. Associates with the centriolar satellite BBSome protein complex Interacts with BBS4; the interaction limits BBS4 availability for association with the BBSome complex, and hence negatively regulates ciliary localization of the BBSome complex. Interacts with MIB1. Interacts with PCM1; the interaction increases in response to ultraviolet light (UV) radiation. Associates with microtubule; association to microtubule is reduced in response to cellular stress, such as UV stimulation, in a process that requires p38 MAP kinase signaling. Interacts with CEP290, DCTN1, MAP1LC3B, PCNT, PCM1 and CEP152. Interacts with 14-3-3 proteins following UV-induced phosphorylation by MAPKAPK2; this inhibits formation of novel centriolar satellites. Interacts with SDCCAG8. Interacts with CCDC61. Interacts with PLK4. In terms of processing, ubiquitinated. Undergoes monoubiquitination catalyzed by the E3 ubiquitin-protein ligase MIB1 in proliferating cells, preventing cilia formation. Monoubiquitination by MIB1 is inhibited in response to cellular stress, such as ultraviolet light (UV) radiation or heat shock, resulting in ciliogenesis restoration. Post-translationally, MAPKAPK2-dependent phosphorylation at Ser-47 and Ser-78 occurs in response to cellular stress such as exposure to ultraviolet irradiation and promotes binding to 14-3-3 proteins which leads to cytoplasmic sequestration of CEP131 and blocks formation of new centriolar satellites. Phosphorylation at Ser-78 mediated by PLK4 is essential for proper organization and integrity of centriolar satellites but is dispensable for its localization to centrioles and its function in ciliogenesis. In terms of tissue distribution, localized to the pre-acrosome region of round and elongated spermatids in testis but also present in ovary, brain and adipose tissue.

It localises to the cytoplasm. Its subcellular location is the cytoskeleton. The protein localises to the microtubule organizing center. The protein resides in the centrosome. It is found in the centriolar satellite. It localises to the centriole. Its subcellular location is the cilium basal body. The protein localises to the cytoplasmic vesicle. The protein resides in the secretory vesicle. It is found in the acrosome. Component of centriolar satellites contributing to the building of a complex and dynamic network required to regulate cilia/flagellum formation. In proliferating cells, MIB1-mediated ubiquitination induces its sequestration within centriolar satellites, precluding untimely cilia formation initiation. In contrast, during normal and ultraviolet or heat shock cellular stress-induced ciliogenesis, its non-ubiquitinated form is rapidly displaced from centriolar satellites and recruited to centrosome/basal bodies in a microtubule- and p38 MAPK-dependent manner. Also acts as a negative regulator of BBSome ciliary trafficking. Plays a role in sperm flagellar formation; may be involved in the regulation of intraflagellar transport (IFT) and/or intramanchette (IMT) trafficking, which are important for axoneme extension and/or cargo delivery to the nascent sperm tail. Required for optimal cell proliferation and cell cycle progression; may play a role in the regulation of genome stability and centriole duplication in non-ciliogenic cells. Involved in centriole duplication. Required for CEP152, WDR62 and CEP63 centrosomal localization and promotes the centrosomal localization of CDK2. Essential for maintaining proper centriolar satellite integrity. This Mus musculus (Mouse) protein is Centrosomal protein of 131 kDa (Cep131).